The sequence spans 359 residues: Cytochrome c oxidase subunit 2 (359 aa).

Positions 1 to 28 (MEQQNKRGLKRKALLGGVLGLGGLAMAG) are cleaved as a signal peptide. Cys29 is lipidated: S-diacylglycerol cysteine. Transmembrane regions (helical) follow at residues 64–84 (VWVA…TAIF) and 107–127 (VPLE…LFFF). The tract at residues 168 to 203 (PGGQDYQGSDPERQAAAEASKKDPSGDNPIHGNSKS) is disordered. A compositionally biased stretch (basic and acidic residues) spans 177 to 192 (DPERQAAAEASKKDPS). Cu cation-binding residues include His244, Cys285, Glu287, Cys289, His293, and Met296. The segment at 335–359 (YATSTSPFVSDRTATRDGENTQSNA) is disordered.

Associates with subunits I, III and IV to form cytochrome c oxidase. The 4 subunit cytochrome c oxidase forms a supercomplex with the menaquinol-cytochrome c reductase complex (cytochrome bc1). Binuclear copper center (CuA) is required as a cofactor.

It localises to the cell membrane. The catalysed reaction is 4 Fe(II)-[cytochrome c] + O2 + 8 H(+)(in) = 4 Fe(III)-[cytochrome c] + 2 H2O + 4 H(+)(out). Its function is as follows. Subunits I and II form the functional core of the enzyme complex. Electrons originating in cytochrome c are transferred via heme a and Cu(A) to the binuclear center formed by heme a3 and Cu(B). The protein is Cytochrome c oxidase subunit 2 (ctaC) of Corynebacterium glutamicum (strain ATCC 13032 / DSM 20300 / JCM 1318 / BCRC 11384 / CCUG 27702 / LMG 3730 / NBRC 12168 / NCIMB 10025 / NRRL B-2784 / 534).